The chain runs to 392 residues: Probable Ni/Fe-hydrogenase 2 b-type cytochrome subunit (392 aa).

Residues 1–11 (MSHDPQPLGGK) are Periplasmic-facing. The helical transmembrane segment at 12-32 (IISKPVMIFGPLIVICMLLIV) threads the bilayer. Over 33–34 (KR) the chain is Cytoplasmic. A helical membrane pass occupies residues 35 to 55 (LVFGLGSVSDLNGGFPWGVWI). The Periplasmic portion of the chain corresponds to 56–58 (AFD). A helical transmembrane segment spans residues 59 to 79 (LLIGTGFACGGWALAWAVYVF). Topologically, residues 80–90 (NRGQYHPLVRP) are cytoplasmic. Residues 91-111 (ALLASLFGYSLGGLSITIDVG) traverse the membrane as a helical segment. Residues 112-133 (RYWNLPYFYIPGHFNVNSVLFE) are Periplasmic-facing. The chain crosses the membrane as a helical span at residues 134 to 154 (TAVCMTIYIGVMALEFAPALF). The Cytoplasmic portion of the chain corresponds to 155-168 (ERLGWKVSLQRLNK). A helical transmembrane segment spans residues 169 to 189 (VMFFIIALGALLPTMHQSSMG). At 190–207 (SLMISAGYKVHPLWQSYE) the chain is on the periplasmic side. The helical transmembrane segment at 208-228 (MLPLFSLLTAFIMGFSIVIFE) threads the bilayer. Residues 229-249 (GSLVQAGLRGNGPDEKSLFVK) are Cytoplasmic-facing. The chain crosses the membrane as a helical span at residues 250 to 270 (LTNTISVLLAIFIVLRFGELI). At 271 to 281 (YRDKLSLAFAG) the chain is on the periplasmic side. The helical transmembrane segment at 282 to 302 (DFYSVMFWIEVLLMLFPLVVL) threads the bilayer. At 303–333 (RVAKLRNDSRMLFLSALSALLGCATWRLTYS) the chain is on the cytoplasmic side. Residues 334–354 (LVAFNPGGGYAYFPTWEELLI) form a helical membrane-spanning segment. Serine 355 is a topological domain (periplasmic). The helical transmembrane segment at 356-376 (IGFVAIEICAYIVLIRLLPIL) threads the bilayer. Residues 377–392 (PPLKQNDHNRHEASKA) lie on the Cytoplasmic side of the membrane.

It belongs to the NrfD family.

It is found in the cell inner membrane. In terms of biological role, probable b-type cytochrome. The chain is Probable Ni/Fe-hydrogenase 2 b-type cytochrome subunit (hybB) from Escherichia coli (strain K12).